Reading from the N-terminus, the 888-residue chain is Serine/threonine-protein phosphatase 1 regulatory subunit 10 (888 aa).

The tract at residues 1–348 (MGSGPIDPKE…EPAPPAEPMD (348 aa)) is interaction with TOX4. A TFIIS N-terminal domain is found at 73-147 (KLLNNWLTYS…SDWMAVIRSQ (75 aa)). 4 disordered regions span residues 147 to 213 (QSST…STGL), 247 to 270 (SATAAPGDAAPPAEKKYKPLNTAP), 306 to 400 (KKKK…KTVT), and 534 to 853 (VETL…HGGD). Basic and acidic residues-rich tracts occupy residues 153–166 (AEKDKKKRKEEGKS) and 174–196 (PLTEVKAETRAEEAPEKKKEKPK). Lysine 179 participates in a covalent cross-link: Glycyl lysine isopeptide (Lys-Gly) (interchain with G-Cter in SUMO2). Over residues 248–258 (ATAAPGDAAPP) the composition is skewed to low complexity. Lysine 262 participates in a covalent cross-link: Glycyl lysine isopeptide (Lys-Gly) (interchain with G-Cter in SUMO2). At serine 313 the chain carries Phosphoserine. Polar residues predominate over residues 325 to 334 (KTSTEQSTAK). Residue serine 382 is modified to Phosphoserine. The segment at 388–417 (QLTRKGRKRKTVTWPEEGKLREYFYFELDE) is necessary for interaction with PPP1CA. Positions 393–408 (GRKRKTVTWPEEGKLR) are necessary for interaction with PPP1CC. The PP1-binding motif motif lies at 394-423 (RKRKTVTWPEEGKLREYFYFELDETERVNV). Threonine 398 bears the Phosphothreonine mark. The interaction with WDR82 stretch occupies residues 418-619 (TERVNVNKIK…LKQMLVPHGL (202 aa)). Gly residues predominate over residues 540-551 (GGSGGSPDGAGG). Phosphoserine is present on residues serine 545 and serine 591. Residues 583-595 (EILTSIMGSPNSH) are compositionally biased toward polar residues. Positions 596 to 611 (PSEELLKQPDYSDKLK) are enriched in basic and acidic residues. Over residues 644 to 655 (PPGPGGPMPGPH) the composition is skewed to pro residues. Arginine 665 is subject to Omega-N-methylarginine. Residues 674–690 (RGGDPFWDGPGDPMRGG) show a composition bias toward low complexity. Arginine 693 and arginine 737 each carry omega-N-methylarginine. Gly residues-rich tracts occupy residues 724 to 762 (ARGGRSGGGPPNGRGGPGGGGMVGGGGHRPHEGPGGSMG) and 784 to 794 (GPGGNMGGSGG). Basic and acidic residues predominate over residues 811 to 851 (PHDVPSHRGHDHRGPPPHEHRGHDGHGGGGHRGHDGGHSHG). The C3H1-type zinc finger occupies 854-882 (MSNRPVCRHFMMKGNCRYENNCAFYHPGV).

In terms of assembly, component of the PNUTS-PP1 complex (also named PTW/PP1 complex), composed of PPP1R10/PNUTS, TOX4, WDR82, and PPP1CA (or PPP1CB or PPP1CC). Phosphorylated on Ser-398 by PKA within the region necessary for interaction with PPP1CA.

The protein localises to the nucleus. Its subcellular location is the chromosome. Substrate-recognition component of the PNUTS-PP1 protein phosphatase complex, a protein phosphatase 1 (PP1) complex that promotes RNA polymerase II transcription pause-release, allowing transcription elongation. Promoter-proximal pausing by RNA polymerase II is a transcription halt following transcription initiation but prior to elongation, which acts as a checkpoint to control that transcripts are favorably configured for transcriptional elongation. The PNUTS-PP1 complex mediates the release of RNA polymerase II from promoter-proximal region of genes by catalyzing dephosphorylation of proteins involved in transcription, such as AFF4, CDK9, MEPCE, INTS12, NCBP1, POLR2M/GDOWN1 and SUPT6H. The PNUTS-PP1 complex also regulates RNA polymerase II transcription termination by mediating dephosphorylation of SUPT5H in termination zones downstream of poly(A) sites, thereby promoting deceleration of RNA polymerase II transcription. PNUTS-PP1 complex is also involved in the response to replication stress by mediating dephosphorylation of POLR2A at 'Ser-5' of the CTD, promoting RNA polymerase II degradation. The PNUTS-PP1 complex also plays a role in the control of chromatin structure and cell cycle progression during the transition from mitosis into interphase. PNUTS-PP1 complex mediates dephosphorylation of MYC, promoting MYC stability by preventing MYC ubiquitination by the SCF(FBXW7) complex. In addition to acts as a substrate-recognition component, PPP1R10/PNUTS also acts as a nuclear targeting subunit for the PNUTS-PP1 complex. In some context, PPP1R10/PNUTS also acts as an inhibitor of protein phosphatase 1 (PP1) activity by preventing access to substrates, such as RB. The chain is Serine/threonine-protein phosphatase 1 regulatory subunit 10 from Mus musculus (Mouse).